The chain runs to 310 residues: HTH-type transcriptional activator TtdR (310 aa).

In terms of domain architecture, HTH lysR-type spans P6–T63. The segment at residues F23–Q42 is a DNA-binding region (H-T-H motif).

The protein belongs to the LysR transcriptional regulatory family.

Positive regulator required for L-tartrate-dependent anaerobic growth on glycerol. Induces expression of the ttdA-ttdB-ygjE operon. The protein is HTH-type transcriptional activator TtdR (ttdR) of Escherichia coli O6:H1 (strain CFT073 / ATCC 700928 / UPEC).